The following is a 144-amino-acid chain: Protein cornichon (144 aa).

Over M1–Y10 the chain is Lumenal. The interaction with grk stretch occupies residues M1–L57. Residues I11–F31 form a helical membrane-spanning segment. At D32–Y56 the chain is on the cytoplasmic side. Residues L57–L77 traverse the membrane as a helical segment. The Lumenal portion of the chain corresponds to N78 to K122. A helical membrane pass occupies residues L123–S143. Position 144 (T144) is a topological domain, cytoplasmic.

The protein belongs to the cornichon family. As to quaternary structure, interacts with grk.

It localises to the endoplasmic reticulum membrane. Its function is as follows. Acts as a cargo receptor necessary for the transportation of gurken (grk) to a transitional endoplasmic reticulum (tER) site and promotes its incorporation into coat protein complex II (COPII) vesicles. Associated with gurken, produces a signal received by torpedo resulting in a signaling pathway that first establishes posterior follicle cell fates and normal localization of the anterior and posterior determinants, later they act in a signaling event inducing dorsal follicle cell fates and regulating the dorsal-ventral pattern of egg and embryo. This Drosophila virilis (Fruit fly) protein is Protein cornichon (cni).